We begin with the raw amino-acid sequence, 580 residues long: Tyrosyl-DNA phosphodiesterase 1 (580 aa).

Positions 65–117 are disordered; it reads ATNKEQEAHSSSSKPAVTAPVASGSSSSGSLDTNPSGSSASGPAASQDTSNLA. Positions 87-110 are enriched in low complexity; sequence SGSSSSGSLDTNPSGSSASGPAAS. His248 functions as the Nucleophile in the catalytic mechanism. Residue Lys250 coordinates substrate. The interaction with DNA stretch occupies residues 387-390; it reads SIGS. The active-site Proton donor/acceptor is the His479. Position 481 (Lys481) interacts with substrate.

Belongs to the tyrosyl-DNA phosphodiesterase family. Expressed in the body and at higher levels in the head. Expressed in the delaminating neuroblasts and a few ganglion mother cells in stage 11-14 embryonic central nervous system. Weak expression is seen in gonads at stage 16. Expressed in the brain; expression is regulated by DIP2.

It is found in the nucleus. The protein localises to the cytoplasm. In terms of biological role, DNA repair enzyme that can remove a variety of covalent adducts from DNA through hydrolysis of a 3'-phosphodiester bond, giving rise to DNA with a free 3' phosphate. Catalyzes the hydrolysis of dead-end complexes between DNA and the topoisomerase I active site tyrosine residue. Hydrolyzes 3'-phosphoglycolates on protruding 3' ends on DNA double-strand breaks due to DNA damage by radiation and free radicals. Acts on blunt-ended double-strand DNA breaks and on single-stranded DNA. May have low 3'exonuclease activity and may be able to remove a single nucleoside from the 3'end of DNA and RNA molecules with 3'hydroxyl groups. Has no exonuclease activity towards DNA or RNA with a 3'phosphate. Required for normal polarization of epidermal cells, correct subcellular location of the Crb complex to the apical lateral membrane, and for normal neuronal development during embryonic development. Contributes to maintenance of epithelial cells in response to topoisomerase-1-mediated and oxidative DNA damage. Required for precise axonal bifurcation in mushroom body neurons. Required for maintenance of normal neuronal function. The polypeptide is Tyrosyl-DNA phosphodiesterase 1 (Drosophila melanogaster (Fruit fly)).